Reading from the N-terminus, the 102-residue chain is uncharacterized protein (102 aa).

This is an uncharacterized protein from Bacillus subtilis (strain 168).